The primary structure comprises 241 residues: Small ribosomal subunit protein uS3 (241 aa).

One can recognise a KH type-2 domain in the interval 39–107; sequence IRKYLEKELK…ETHLNIVEVR (69 aa). A disordered region spans residues 214-241; the sequence is ASERRATEGDAAHGGGGDRERGRRRENA.

The protein belongs to the universal ribosomal protein uS3 family. In terms of assembly, part of the 30S ribosomal subunit. Forms a tight complex with proteins S10 and S14.

Binds the lower part of the 30S subunit head. Binds mRNA in the 70S ribosome, positioning it for translation. The protein is Small ribosomal subunit protein uS3 of Mesorhizobium japonicum (strain LMG 29417 / CECT 9101 / MAFF 303099) (Mesorhizobium loti (strain MAFF 303099)).